The primary structure comprises 3515 residues: Microtubule-actin cross-linking factor 1, isoforms 6/7 (3515 aa).

7 disordered regions span residues 1-23, 108-136, 155-196, 965-1178, 1217-1298, 1710-1730, and 3078-3108; these read MGKPLSRPDCLRRNPSCLGKGEE, VQKSAPVPPRRRPNAERKDNVNRRSWKSF, VSEA…TLEH, TEED…AVPT, SPAA…SPAA, EELATSGGQSPTGEQIPQFQQ, and PTHAPFIEKSRSGGRKSLSQPTPPPMPILSQ. The segment covering 120–129 has biased composition (basic and acidic residues); the sequence is PNAERKDNVN. The segment at 157–245 is 13 X 13 AA approximate tandem repeat of P-T-S-P-A-A-A-V-P-T-P-E-E; it reads EAGASNPSLQ…ESEAVATSGN (89 aa). Low complexity-rich tracts occupy residues 995–1031 and 1040–1139; these read STPEEPASPAAAVPTPEEPTSPAAAVPTPEEPTSPAA and TSPA…AVPT. 13 tandem repeats follow at residues 1012–1024, 1026–1037, 1038–1051, 1052–1064, 1065–1077, 1078–1090, 1091–1103, 1104–1116, 1117–1129, 1130–1142, 1143–1155, 1156–1168, and 1169–1178. A compositionally biased stretch (pro residues) spans 1140 to 1151; the sequence is PEEPAFPAPAVP. 2 stretches are compositionally biased toward low complexity: residues 1162-1178 and 1268-1298; these read AVPTPEESASPAAAVPT and SSPAASVPTPEEPASPAAAVSNLEEPASPAA. Residues 1715–1730 are compositionally biased toward polar residues; that stretch reads SGGQSPTGEQIPQFQQ. 2 consecutive EF-hand domains span residues 3168-3203 and 3204-3239; these read HKKSRVMDFFRRIDKDQDGKITRQEFIDGILASKFP and TTKLEMTAVADIFDRDGDGYIDYYEFVAALHPNKDA. Positions 3181, 3183, 3185, 3187, 3192, 3217, 3219, 3221, 3223, and 3228 each coordinate Ca(2+). A GAR domain is found at 3244–3316; the sequence is TDADKIEDEV…EFLVKNDPCR (73 aa). A disordered region spans residues 3332-3515; that stretch reads PEGASQGMTP…ASPRTPGPKR (184 aa). Residues 3352 to 3386 show a composition bias toward low complexity; that stretch reads SSRAASPTRSSSSASQSNHSCTSMPSSPATPASGT. Residues 3402-3426 are compositionally biased toward polar residues; that stretch reads TFHSSRTSLAGDTSNSSSPASTGAK. A compositionally biased stretch (low complexity) spans 3437–3451; it reads SRPGSRAGSRAGSRA. The span at 3466-3488 shows a compositional bias: polar residues; that stretch reads ETQSACSDTSESSAAGGQGNSRR.

It is found in the cytoplasm. The protein resides in the cytoskeleton. This Homo sapiens (Human) protein is Microtubule-actin cross-linking factor 1, isoforms 6/7.